Here is a 386-residue protein sequence, read N- to C-terminus: G2/mitotic-specific cyclin-B2 (386 aa).

Residues 45-64 (TNGKVGPSKKPSKASCAQKP) form a disordered region.

Belongs to the cyclin family. Cyclin AB subfamily. Interacts with the CDK1 protein kinase to form a serine/threonine kinase holoenzyme complex also known as maturation promoting factor (MPF). The cyclin subunit imparts substrate specificity to the complex.

Functionally, essential for the control of the cell cycle at the G2/M (mitosis) transition. The protein is G2/mitotic-specific cyclin-B2 (ccnb2) of Oryzias luzonensis (Luzon ricefish).